Consider the following 465-residue polypeptide: MDNQFPSRKGPCFCSFRYVLALFMHFCNIVIIAQRMCLSLTMVAMVNNTNLHGSPNTSAEKRLDNTKNPVYNWSPDVQGIIFSSIFYGAFLIQIPVGYISGIYSIKKLIGFALFLSSLVSIFIPQAAAVGETWIIVCRVVQGITQGTVTTAQHEIWVKWAPPLERGRLTSMSLSGFLLGPFIVLLVTGIICESLGWPMVFYIFGACGCAVCLLWFVLYYDDPKDHPCVSLHEKEYITSSLIQQGSSTRQSLPIKAMIKSLPLWAISFCCFAYLWTYSRLIVYTPTLINSMLHVDIRENGLLSSLPYLFAWICGVIAGHTADFLMSRNMLSLTAIRKLFTAIGLLLPIVFSMCLLYLSSGFYSTITFLILANASSSFCLGGALINALDLAPRYYVFIKGVTTLIGMTGGMTSSTVAGLFLSQDPESSWFKIFLLMSIINVISVIFYLIFAKAEIQDWAKEKQHTRL.

2 N-linked (GlcNAc...) asparagine glycosylation sites follow: N47 and N56. Transmembrane regions (helical) follow at residues 79 to 99 (GIIFSSIFYGAFLIQIPVGYI), 109 to 129 (IGFALFLSSLVSIFIPQAAAV), 171 to 191 (MSLSGFLLGPFIVLLVTGIIC), 198 to 218 (MVFYIFGACGCAVCLLWFVLY), 255 to 275 (AMIKSLPLWAISFCCFAYLWT), 304 to 324 (LPYLFAWICGVIAGHTADFLM), 337 to 357 (LFTAIGLLLPIVFSMCLLYLS), 363 to 383 (TITFLILANASSSFCLGGALI), 399 to 419 (VTTLIGMTGGMTSSTVAGLFL), and 428 to 448 (FKIFLLMSIINVISVIFYLIF).

It belongs to the major facilitator superfamily. Sodium/anion cotransporter family. As to quaternary structure, interacts with PDZK1. In terms of tissue distribution, kidney cortex and liver.

It localises to the apical cell membrane. The catalysed reaction is 3 Na(+)(out) + phosphate(out) = 3 Na(+)(in) + phosphate(in). It catalyses the reaction urate(out) = urate(in). Important for the resorption of phosphate by the kidney. May be involved in actively transporting phosphate into cells via Na(+) cotransport in the renal brush border membrane. Plays a role in urate transport in the kidney. This chain is Sodium-dependent phosphate transport protein 1 (SLC17A1), found in Oryctolagus cuniculus (Rabbit).